The following is a 405-amino-acid chain: Solute carrier family 35 member E2B (405 aa).

Positions 1 to 28 (MSSSVKTPALEELVPGSEEKPKGRSPLS) are disordered. A run of 10 helical transmembrane segments spans residues 81–101 (LWFF…SLLG), 106–126 (MLGA…TLVP), 142–162 (FLMT…LGLV), 167–187 (VAVS…VIMS), 195–215 (TGLL…LCTA), 219–241 (SFNV…QNVF), 264–284 (AAAV…PVIG), 296–316 (VVLL…TAYA), 326–346 (FSVA…IVFG), and 347–367 (NKIT…VLLY). Residues 380-405 (SLAAATGRAPDDTVEPLLPQDPRQHP) are disordered.

Belongs to the TPT transporter family. SLC35E subfamily.

The protein resides in the membrane. Functionally, putative transporter. In Homo sapiens (Human), this protein is Solute carrier family 35 member E2B (SLC35E2B).